The sequence spans 133 residues: ATP synthase epsilon chain (133 aa).

Belongs to the ATPase epsilon chain family. In terms of assembly, F-type ATPases have 2 components, CF(1) - the catalytic core - and CF(0) - the membrane proton channel. CF(1) has five subunits: alpha(3), beta(3), gamma(1), delta(1), epsilon(1). CF(0) has three main subunits: a, b and c.

The protein resides in the cell membrane. In terms of biological role, produces ATP from ADP in the presence of a proton gradient across the membrane. This chain is ATP synthase epsilon chain (atpC), found in Mycoplasma genitalium (strain ATCC 33530 / DSM 19775 / NCTC 10195 / G37) (Mycoplasmoides genitalium).